We begin with the raw amino-acid sequence, 1053 residues long: Sal-like protein 4 (1053 aa).

Residues 1 to 62 form a disordered region; that stretch reads MSRRKQAKPQ…DEVASEDEAT (62 aa). A compositionally biased stretch (low complexity) spans 20–46; sequence EQQPQQQTPEFADAAPAAPAAGELGAP. Phosphoserine is present on Ser-57. The C2H2-type 1; atypical zinc-finger motif lies at 72–94; the sequence is HVCEKCCAEFFSISEFLEHKKNC. The disordered stretch occupies residues 116 to 149; the sequence is SGAVLSHQPTSPGSKDCHRENGGSSEDMKEKPDA. Over residues 130–149 the composition is skewed to basic and acidic residues; that stretch reads KDCHRENGGSSEDMKEKPDA. Lys-156 is covalently cross-linked (Glycyl lysine isopeptide (Lys-Gly) (interchain with G-Cter in SUMO1); alternate). Lys-156 is covalently cross-linked (Glycyl lysine isopeptide (Lys-Gly) (interchain with G-Cter in SUMO2); alternate). Glycyl lysine isopeptide (Lys-Gly) (interchain with G-Cter in SUMO2) cross-links involve residues Lys-175, Lys-190, and Lys-290. Ser-307 is modified (phosphoserine). Lys-316 is covalently cross-linked (Glycyl lysine isopeptide (Lys-Gly) (interchain with G-Cter in SUMO1); alternate). Lys-316 is covalently cross-linked (Glycyl lysine isopeptide (Lys-Gly) (interchain with G-Cter in SUMO2); alternate). Residue Lys-372 forms a Glycyl lysine isopeptide (Lys-Gly) (interchain with G-Cter in SUMO2) linkage. A Glycyl lysine isopeptide (Lys-Gly) (interchain with G-Cter in SUMO1); alternate cross-link involves residue Lys-374. Lys-374 is covalently cross-linked (Glycyl lysine isopeptide (Lys-Gly) (interchain with G-Cter in SUMO2); alternate). 2 consecutive C2H2-type zinc fingers follow at residues 382 to 404 and 410 to 432; these read HKCK…LRSH and FVCS…FHRH. Lys-436 is covalently cross-linked (Glycyl lysine isopeptide (Lys-Gly) (interchain with G-Cter in SUMO2)). Positions 483-496 are enriched in polar residues; that stretch reads VGLPQNLSSGTNPK. Residues 483-546 are disordered; that stretch reads VGLPQNLSSG…QGSGTPEPGS (64 aa). Thr-541 carries the phosphothreonine modification. Residue Lys-550 forms a Glycyl lysine isopeptide (Lys-Gly) (interchain with G-Cter in SUMO2) linkage. 2 C2H2-type zinc fingers span residues 566 to 588 and 594 to 616; these read NECL…YRTH and FQCK…LGVH. Residues Lys-597 and Lys-623 each participate in a glycyl lysine isopeptide (Lys-Gly) (interchain with G-Cter in SUMO2) cross-link. A C2H2-type 6 zinc finger spans residues 626 to 648; sequence HSCPICQKKFTNAVMLQQHIRMH. Disordered regions lie at residues 694–714, 736–776, and 788–828; these read EEVS…PLPS, VGPA…QSRS, and LSPA…LPST. Positions 698–708 are enriched in low complexity; that stretch reads SQEAPSSSSKV. Polar residues-rich tracts occupy residues 743-776 and 788-797; these read LQRQ…QSRS and LSPANSQAES. Ser-776 and Ser-789 each carry phosphoserine. Residues 810–821 show a composition bias toward basic and acidic residues; that stretch reads ESSENSRTEMEG. Lys-838 participates in a covalent cross-link: Glycyl lysine isopeptide (Lys-Gly) (interchain with G-Cter in SUMO1); alternate. Lys-838 participates in a covalent cross-link: Glycyl lysine isopeptide (Lys-Gly) (interchain with G-Cter in SUMO2); alternate. Ser-852 carries the phosphoserine modification. A C2H2-type 7 zinc finger spans residues 870–892; that stretch reads HGCTRCGKNFSSASALQIHERTH. Residue Lys-896 forms a Glycyl lysine isopeptide (Lys-Gly) (interchain with G-Cter in SUMO2) linkage. The C2H2-type 8 zinc-finger motif lies at 898-920; sequence FVCNICGRAFTTKGNLKVHYMTH. Residues Lys-932 and Lys-947 each participate in a glycyl lysine isopeptide (Lys-Gly) (interchain with G-Cter in SUMO2) cross-link. A disordered region spans residues 1018-1039; sequence GSQSGISADVEKPSATDGVPKH. Phosphoserine is present on Ser-1019.

The protein belongs to the sal C2H2-type zinc-finger protein family. In terms of assembly, interacts with POU5F1/OCT4. Interacts with NANOG. Interacts with BEND3. Interacts with NSD2 (via PHD-type zinc fingers 1, 2 and 3). Interacts with NRBP1. Isoform SALL4B exists primarily as a ubiquitinated form. In terms of processing, sumoylation with both SUMO1 and SUMO2 regulates the stability, subcellular localization, transcriptional activity, and may reduce interaction with POU5F1/OCT4. As to expression, expressed in testis. Constitutively expressed in acute myeloid leukemia (AML).

Its subcellular location is the cytoplasm. The protein resides in the nucleus. In terms of biological role, transcription factor with a key role in the maintenance and self-renewal of embryonic and hematopoietic stem cells. The sequence is that of Sal-like protein 4 (SALL4) from Homo sapiens (Human).